The following is a 228-amino-acid chain: Sodium channel regulatory subunit beta-4 (228 aa).

Residues 1–30 (MSRAGNRGNTQARWLGTGLLGLFLLPMYLS) form the signal peptide. The Ig-like C2-type domain occupies 31–148 (LEVSVGKATT…KDLNNSATIF (118 aa)). The Extracellular portion of the chain corresponds to 31–161 (LEVSVGKATT…VDKLEKVDNT (131 aa)). N-linked (GlcNAc...) asparagine glycans are attached at residues Asn-45, Asn-71, Asn-113, and Asn-142. Cysteines 53 and 131 form a disulfide. Residues 162–182 (VTLIILAVVGGVIGLLVCILL) traverse the membrane as a helical segment. Residues 183–228 (LKKLITFILKKTREKKKECLVSSSGNDNTENGLPGSKAEEKPPTKV) are Cytoplasmic-facing. A disordered region spans residues 199-228 (KECLVSSSGNDNTENGLPGSKAEEKPPTKV). The span at 203 to 213 (VSSSGNDNTEN) shows a compositional bias: polar residues. Residues 219–228 (KAEEKPPTKV) are compositionally biased toward basic and acidic residues.

The protein belongs to the sodium channel auxiliary subunit SCN4B (TC 8.A.17) family. In terms of assembly, a voltage-gated sodium (Nav) channel consists of an ion-conducting pore-forming alpha subunit functional on its own that is regulated by one or more beta subunits. The beta subunit SCN4B is disulfide-linked to the pore-forming alpha subunit. Interacts with SCN1A; regulatory subunit of SCN1A/Nav1.1. Interacts with SCN2A; regulatory subunit of SCN2A/Nav1.2. Post-translationally, contains an interchain disulfide bond with SCN2A.

It is found in the cell membrane. Functionally, regulatory subunit of multiple voltage-gated sodium (Nav) channels directly mediating the depolarization of excitable membranes. Navs, also called VGSCs (voltage-gated sodium channels) or VDSCs (voltage-dependent sodium channels), operate by switching between closed and open conformations depending on the voltage difference across the membrane. In the open conformation they allow Na(+) ions to selectively pass through the pore, along their electrochemical gradient. The influx of Na+ ions provokes membrane depolarization, initiating the propagation of electrical signals throughout cells and tissues. The accessory beta subunits participate in localization and functional modulation of the Nav channels. Modulates the activity of SCN1A/Nav1.1. Modulates the activity of SCN2A/Nav1.2. The chain is Sodium channel regulatory subunit beta-4 from Mus musculus (Mouse).